A 678-amino-acid chain; its full sequence is Probable 3',5'-cyclic phosphodiesterase pde-3 (678 aa).

Disordered regions lie at residues 1–27 (MSPGPPAVGGVSPPVMVPGSAPPFQPT), 52–95 (AEMR…VLGG), and 223–250 (TVPAEPNKARSSSYWKTEASPSNNNEHE). A compositionally biased stretch (low complexity) spans 7–19 (AVGGVSPPVMVPG). 2 stretches are compositionally biased toward polar residues: residues 60–85 (TATSSPASSGVSIQQRRGSTTQNSGV) and 231–246 (ARSSSYWKTEASPSNN). The region spanning 281-632 (RYDTRELDTD…RKWKEQIELE (352 aa)) is the PDEase domain. Catalysis depends on H356, which acts as the Proton donor. Residues H360, H421, D422, and D531 each coordinate a divalent metal cation. A disordered region spans residues 654 to 678 (EEESASTSDSPDPRRDSPLDSDLSQ).

This sequence belongs to the cyclic nucleotide phosphodiesterase family. A divalent metal cation serves as cofactor.

The catalysed reaction is a nucleoside 3',5'-cyclic phosphate + H2O = a nucleoside 5'-phosphate + H(+). This is Probable 3',5'-cyclic phosphodiesterase pde-3 (pde-3) from Caenorhabditis elegans.